The chain runs to 335 residues: Acetyl-coenzyme A carboxylase carboxyl transferase subunit alpha (335 aa).

The region spanning Thr-48–Ala-308 is the CoA carboxyltransferase C-terminal domain.

It belongs to the AccA family. In terms of assembly, acetyl-CoA carboxylase is a heterohexamer composed of biotin carboxyl carrier protein (AccB), biotin carboxylase (AccC) and two subunits each of ACCase subunit alpha (AccA) and ACCase subunit beta (AccD).

It localises to the cytoplasm. The enzyme catalyses N(6)-carboxybiotinyl-L-lysyl-[protein] + acetyl-CoA = N(6)-biotinyl-L-lysyl-[protein] + malonyl-CoA. It participates in lipid metabolism; malonyl-CoA biosynthesis; malonyl-CoA from acetyl-CoA: step 1/1. Its function is as follows. Component of the acetyl coenzyme A carboxylase (ACC) complex. First, biotin carboxylase catalyzes the carboxylation of biotin on its carrier protein (BCCP) and then the CO(2) group is transferred by the carboxyltransferase to acetyl-CoA to form malonyl-CoA. This Chlorobium phaeovibrioides (strain DSM 265 / 1930) (Prosthecochloris vibrioformis (strain DSM 265)) protein is Acetyl-coenzyme A carboxylase carboxyl transferase subunit alpha.